Here is a 148-residue protein sequence, read N- to C-terminus: Large ribosomal subunit protein uL11 (148 aa).

The protein belongs to the universal ribosomal protein uL11 family. In terms of assembly, part of the ribosomal stalk of the 50S ribosomal subunit. Interacts with L10 and the large rRNA to form the base of the stalk. L10 forms an elongated spine to which L12 dimers bind in a sequential fashion forming a multimeric L10(L12)X complex. One or more lysine residues are methylated.

In terms of biological role, forms part of the ribosomal stalk which helps the ribosome interact with GTP-bound translation factors. The sequence is that of Large ribosomal subunit protein uL11 from Myxococcus xanthus (strain DK1622).